Reading from the N-terminus, the 396-residue chain is Elongation factor Tu (396 aa).

The 195-residue stretch at 11-205 (KPHVNIGTIG…TVDEYIPTPE (195 aa)) folds into the tr-type G domain. The interval 20 to 27 (GHVDHGKT) is G1. 20–27 (GHVDHGKT) is a GTP binding site. Residue Thr27 participates in Mg(2+) binding. Residues 61-65 (GITIN) form a G2 region. The interval 82–85 (DAPG) is G3. GTP-binding positions include 82–86 (DAPGH) and 137–140 (NKVD). The interval 137–140 (NKVD) is G4. The G5 stretch occupies residues 175-177 (SAL).

This sequence belongs to the TRAFAC class translation factor GTPase superfamily. Classic translation factor GTPase family. EF-Tu/EF-1A subfamily. Monomer.

Its subcellular location is the cytoplasm. The enzyme catalyses GTP + H2O = GDP + phosphate + H(+). GTP hydrolase that promotes the GTP-dependent binding of aminoacyl-tRNA to the A-site of ribosomes during protein biosynthesis. The polypeptide is Elongation factor Tu (Lactobacillus johnsonii (strain CNCM I-12250 / La1 / NCC 533)).